A 342-amino-acid polypeptide reads, in one-letter code: tRNA N6-adenosine threonylcarbamoyltransferase (342 aa).

Fe cation-binding residues include His111 and His115. Substrate is bound by residues 134 to 138 (LVSGG), Asp167, Gly180, and Asn277. Asp305 contacts Fe cation.

Belongs to the KAE1 / TsaD family. Fe(2+) serves as cofactor.

It localises to the cytoplasm. The enzyme catalyses L-threonylcarbamoyladenylate + adenosine(37) in tRNA = N(6)-L-threonylcarbamoyladenosine(37) in tRNA + AMP + H(+). In terms of biological role, required for the formation of a threonylcarbamoyl group on adenosine at position 37 (t(6)A37) in tRNAs that read codons beginning with adenine. Is involved in the transfer of the threonylcarbamoyl moiety of threonylcarbamoyl-AMP (TC-AMP) to the N6 group of A37, together with TsaE and TsaB. TsaD likely plays a direct catalytic role in this reaction. This chain is tRNA N6-adenosine threonylcarbamoyltransferase, found in Histophilus somni (strain 2336) (Haemophilus somnus).